A 242-amino-acid chain; its full sequence is Uridylate kinase (242 aa).

An ATP-binding site is contributed by 15 to 18 (KLSG). Position 57 (glycine 57) interacts with UMP. Residues glycine 58 and arginine 62 each coordinate ATP. Residues aspartate 78 and 139 to 146 (TGNPFFTT) each bind UMP. The ATP site is built by threonine 166, tyrosine 172, and aspartate 175.

The protein belongs to the UMP kinase family. Homohexamer.

It localises to the cytoplasm. It carries out the reaction UMP + ATP = UDP + ADP. It functions in the pathway pyrimidine metabolism; CTP biosynthesis via de novo pathway; UDP from UMP (UMPK route): step 1/1. With respect to regulation, inhibited by UTP. In terms of biological role, catalyzes the reversible phosphorylation of UMP to UDP. In Acinetobacter baumannii (strain ATCC 17978 / DSM 105126 / CIP 53.77 / LMG 1025 / NCDC KC755 / 5377), this protein is Uridylate kinase.